An 86-amino-acid polypeptide reads, in one-letter code: Neurotoxin LmNaTx35.2 (86 aa).

The N-terminal stretch at 1 to 21 is a signal peptide; that stretch reads MQLKIQLLMLVLMTVLTGVLG. Residues 22–85 enclose the LCN-type CS-alpha/beta domain; that stretch reads KDGYVVHEDT…VYGDKGTYCW (64 aa). 4 cysteine pairs are disulfide-bonded: Cys-33/Cys-84, Cys-37/Cys-60, Cys-46/Cys-65, and Cys-50/Cys-67.

It belongs to the long (4 C-C) scorpion toxin superfamily. Sodium channel inhibitor family. Alpha subfamily. Expressed by the venom gland.

It is found in the secreted. Functionally, binds voltage-independently at site-3 of voltage-gated sodium channels (Nav) and inhibits the inactivation of the activated channels, thereby blocking neuronal transmission. The chain is Neurotoxin LmNaTx35.2 from Lychas mucronatus (Chinese swimming scorpion).